Reading from the N-terminus, the 238-residue chain is Protein A47 (238 aa).

Belongs to the orthopoxvirus A47 protein family.

This Vaccinia virus (strain Ankara) (VACV) protein is Protein A47.